Reading from the N-terminus, the 130-residue chain is Small ribosomal subunit protein uS11 (130 aa).

The protein belongs to the universal ribosomal protein uS11 family. Part of the 30S ribosomal subunit. Interacts with proteins S7 and S18. Binds to IF-3.

In terms of biological role, located on the platform of the 30S subunit, it bridges several disparate RNA helices of the 16S rRNA. Forms part of the Shine-Dalgarno cleft in the 70S ribosome. This Prochlorococcus marinus (strain MIT 9312) protein is Small ribosomal subunit protein uS11.